We begin with the raw amino-acid sequence, 324 residues long: Protoheme IX farnesyltransferase (324 aa).

A run of 9 helical transmembrane segments spans residues 31 to 51 (LILL…SGQV), 56 to 76 (FLTT…INCI), 105 to 125 (VFAA…ANLL), 126 to 146 (SACL…YWLK), 153 to 173 (IVIG…AVTG), 181 to 201 (VLFA…AMMI), 214 to 234 (PVVN…LLLL), 238 to 258 (LLLV…AIVL), and 285 to 305 (FSIL…LPWT).

Belongs to the UbiA prenyltransferase family. Protoheme IX farnesyltransferase subfamily.

It is found in the cell inner membrane. The catalysed reaction is heme b + (2E,6E)-farnesyl diphosphate + H2O = Fe(II)-heme o + diphosphate. Its pathway is porphyrin-containing compound metabolism; heme O biosynthesis; heme O from protoheme: step 1/1. Converts heme B (protoheme IX) to heme O by substitution of the vinyl group on carbon 2 of heme B porphyrin ring with a hydroxyethyl farnesyl side group. This Acaryochloris marina (strain MBIC 11017) protein is Protoheme IX farnesyltransferase.